Here is a 535-residue protein sequence, read N- to C-terminus: UDP-glycosyltransferase stmC (535 aa).

Asn-70 and Asn-422 each carry an N-linked (GlcNAc...) asparagine glycan. A helical membrane pass occupies residues 506 to 526; sequence ASNLDLYIVCIAFVAVPVGVA.

This sequence belongs to the glycosyltransferase 28 family.

Its subcellular location is the membrane. The enzyme catalyses stromemycin aglycone + UDP-alpha-D-glucose = stromemycin + UDP + H(+). It catalyses the reaction exophillate aglycone + UDP-alpha-D-glucose = exophillate + UDP + H(+). The protein operates within mycotoxin biosynthesis. UDP-glycosyltransferase; part of the gene cluster that mediates the biosynthesis of stromemycin, a depside C-glucoside with two unsaturated C9 side chains belonging to aromatic polyketide glycosides. Acts as the tailoring enzyme responsible for 3-C-glucosylation of bininalkenylresorcylic acid produced by the combined action of the HR-PKS stmA and the NR-PKS stmB to yield stromemycin. Possesses a relatively strict acceptor specificity towards bininalkenylresorcylic acid for C-glycosylation, but is able to use several donors including UDP-alpha-D-galactose, UDP-alpha-D-xylose, UDP-alpha-D-4-keto-6-deoxyglucose, UDP-alpha-D-quinovose, and UDP-beta-L-rhamnose. The protein is UDP-glycosyltransferase stmC of Aspergillus ustus.